Consider the following 117-residue polypeptide: NADH-ubiquinone oxidoreductase chain 3 (117 aa).

A run of 3 helical transmembrane segments spans residues 4–24 (IILI…LASI), 60–80 (ITII…MIII), and 86–106 (IMIW…GLYH).

Belongs to the complex I subunit 3 family.

The protein resides in the mitochondrion membrane. The catalysed reaction is a ubiquinone + NADH + 5 H(+)(in) = a ubiquinol + NAD(+) + 4 H(+)(out). Core subunit of the mitochondrial membrane respiratory chain NADH dehydrogenase (Complex I) that is believed to belong to the minimal assembly required for catalysis. Complex I functions in the transfer of electrons from NADH to the respiratory chain. The immediate electron acceptor for the enzyme is believed to be ubiquinone. The chain is NADH-ubiquinone oxidoreductase chain 3 (mt:ND3) from Drosophila subobscura (Fruit fly).